The primary structure comprises 350 residues: Casein kinase II subunit alpha' (350 aa).

Positions 40 to 325 constitute a Protein kinase domain; sequence YQLVRKLGRG…AKEAMEHPYF (286 aa). ATP-binding positions include 46-54 and lysine 69; that span reads LGRGKYSEV. Catalysis depends on aspartate 157, which acts as the Proton acceptor.

It belongs to the protein kinase superfamily. Ser/Thr protein kinase family. CK2 subfamily. Tetramer composed of an alpha chain, an alpha' and two beta chains.

The enzyme catalyses L-seryl-[protein] + ATP = O-phospho-L-seryl-[protein] + ADP + H(+). It carries out the reaction L-threonyl-[protein] + ATP = O-phospho-L-threonyl-[protein] + ADP + H(+). In terms of biological role, casein kinases are operationally defined by their preferential utilization of acidic proteins such as caseins as substrates. The alpha and alpha' chains contain the catalytic site. Participates in Wnt signaling. This chain is Casein kinase II subunit alpha', found in Gallus gallus (Chicken).